A 285-amino-acid polypeptide reads, in one-letter code: HTH-type transcriptional regulator HexR (285 aa).

Residues 2–78 (KNLLEQIQSR…IQLAQSLASG (77 aa)) form the HTH rpiR-type domain. Residues 38–57 (IAALAQAAAVSEPTVNRFCR) constitute a DNA-binding region (H-T-H motif). In terms of domain architecture, SIS spans 122–261 (AVDLLIQARQ…ATGVTLRRGV (140 aa)).

In terms of biological role, involved in regulation of glucose metabolism. Transcriptional repressor of the gap-1 gene and of the edd-glk-gltR-2 and zwf-pgl-eda operons. Acts by binding directly to an inverted pseudopalindromic sequence in the promoter region. The chain is HTH-type transcriptional regulator HexR from Pseudomonas aeruginosa (strain ATCC 15692 / DSM 22644 / CIP 104116 / JCM 14847 / LMG 12228 / 1C / PRS 101 / PAO1).